Reading from the N-terminus, the 109-residue chain is Spermidine export protein MdtI (109 aa).

4 helical membrane passes run 6–26, 36–56, 64–84, and 88–108; these read WIHG…NVLL, CYGI…SQAV, AYAL…WVLF, and LNPK…MIKF.

It belongs to the drug/metabolite transporter (DMT) superfamily. Small multidrug resistance (SMR) (TC 2.A.7.1) family. MdtI subfamily. As to quaternary structure, forms a complex with MdtJ.

The protein localises to the cell inner membrane. Catalyzes the excretion of spermidine. In Salmonella choleraesuis (strain SC-B67), this protein is Spermidine export protein MdtI.